Reading from the N-terminus, the 740-residue chain is Dynein regulatory complex protein 1 (740 aa).

A coiled-coil region spans residues 101–388; that stretch reads IDIREIHRRV…QFKELQKAMR (288 aa). The interval 570–617 is disordered; that stretch reads ASMEKASMEETSTRSELELAEQTEMEGEKEESLVEGEKEEEEETPPSP. The segment covering 575–586 has biased composition (basic and acidic residues); it reads ASMEETSTRSEL. Positions 587–598 are enriched in acidic residues; the sequence is ELAEQTEMEGEK. Residues 691–724 are a coiled coil; sequence LTQRAKLLLENSSLEQQNTELQALLQQYLNSKIN.

This sequence belongs to the DRC1 family. As to quaternary structure, component of the nexin-dynein regulatory complex (N-DRC). Interacts with CCDC65/DRC2, DRC3, GAS8/DRC4 and TCTE1/DRC5.

The protein resides in the cytoplasm. The protein localises to the cytoskeleton. It is found in the cilium axoneme. It localises to the flagellum axoneme. Functionally, component of the nexin-dynein regulatory complex (N-DRC) a key regulator of ciliary/flagellar motility which maintains the alignment and integrity of the distal axoneme and regulates microtubule sliding in motile axonemes. Plays a critical role in the assembly of N-DRC and also stabilizes the assembly of multiple inner dynein arms and radial spokes. Coassembles with CCDC65/DRC2 to form a central scaffold needed for assembly of the N-DRC and its attachment to the outer doublet microtubules. The chain is Dynein regulatory complex protein 1 (DRC1) from Homo sapiens (Human).